The chain runs to 264 residues: Indole-3-glycerol phosphate synthase (264 aa).

The protein belongs to the TrpC family.

The catalysed reaction is 1-(2-carboxyphenylamino)-1-deoxy-D-ribulose 5-phosphate + H(+) = (1S,2R)-1-C-(indol-3-yl)glycerol 3-phosphate + CO2 + H2O. Its pathway is amino-acid biosynthesis; L-tryptophan biosynthesis; L-tryptophan from chorismate: step 4/5. The sequence is that of Indole-3-glycerol phosphate synthase from Rhizorhabdus wittichii (strain DSM 6014 / CCUG 31198 / JCM 15750 / NBRC 105917 / EY 4224 / RW1) (Sphingomonas wittichii).